We begin with the raw amino-acid sequence, 107 residues long: Cytochrome c2 (107 aa).

Glutamine 1 carries the pyrrolidone carboxylic acid modification. Residues cysteine 13, cysteine 16, histidine 17, and methionine 79 each coordinate heme c.

The protein belongs to the cytochrome c family. In terms of processing, binds 1 heme c group covalently per subunit.

It localises to the periplasm. Its function is as follows. Cytochrome c2 is found mainly in purple, non-sulfur, photosynthetic bacteria where it functions as the electron donor to the oxidized bacteriochlorophyll in the photophosphorylation pathway. However, it may also have a role in the respiratory chain and is found in some non-photosynthetic bacteria. This is Cytochrome c2 from Rhodoplanes tepidamans (Rhodoplanes cryptolactis).